We begin with the raw amino-acid sequence, 534 residues long: Peptide chain release factor 3 (534 aa).

The region spanning 9-278 (ARRRTFAIIS…FFVEHAPPPQ (270 aa)) is the tr-type G domain. GTP contacts are provided by residues 18–25 (SHPDAGKT), 86–90 (DTPGH), and 140–143 (NKLD).

This sequence belongs to the TRAFAC class translation factor GTPase superfamily. Classic translation factor GTPase family. PrfC subfamily.

It localises to the cytoplasm. Its function is as follows. Increases the formation of ribosomal termination complexes and stimulates activities of RF-1 and RF-2. It binds guanine nucleotides and has strong preference for UGA stop codons. It may interact directly with the ribosome. The stimulation of RF-1 and RF-2 is significantly reduced by GTP and GDP, but not by GMP. The sequence is that of Peptide chain release factor 3 from Xanthomonas campestris pv. campestris (strain 8004).